Here is a 245-residue protein sequence, read N- to C-terminus: Uridylate kinase (245 aa).

18 to 21 (KLSG) contributes to the ATP binding site. Glycine 60 lines the UMP pocket. Positions 61 and 65 each coordinate ATP. UMP contacts are provided by residues aspartate 80 and 141 to 148 (TGNPFFTT). Positions 168, 174, and 177 each coordinate ATP.

The protein belongs to the UMP kinase family. In terms of assembly, homohexamer.

The protein localises to the cytoplasm. The enzyme catalyses UMP + ATP = UDP + ADP. The protein operates within pyrimidine metabolism; CTP biosynthesis via de novo pathway; UDP from UMP (UMPK route): step 1/1. Its activity is regulated as follows. Inhibited by UTP. Catalyzes the reversible phosphorylation of UMP to UDP. The sequence is that of Uridylate kinase from Pseudomonas aeruginosa (strain UCBPP-PA14).